The sequence spans 288 residues: Co-chaperone protein DjlA (288 aa).

Residues 1–6 (MNFIGK) are Periplasmic-facing. A helical transmembrane segment spans residues 7–30 (ILGFIIGYRFGGLFGGIAGLILGH). Residues 31–288 (IADKKLYELG…DLICKVKGWK (258 aa)) lie on the Cytoplasmic side of the membrane. The J domain maps to 222–288 (DAYKVLGVNA…DLICKVKGWK (67 aa)).

Homodimer.

Its subcellular location is the cell inner membrane. Functionally, regulatory DnaK co-chaperone. Direct interaction between DnaK and DjlA is needed for the induction of the wcaABCDE operon, involved in the synthesis of a colanic acid polysaccharide capsule, possibly through activation of the RcsB/RcsC phosphotransfer signaling pathway. The colanic acid capsule may help the bacterium survive conditions outside the host. The sequence is that of Co-chaperone protein DjlA from Mannheimia succiniciproducens (strain KCTC 0769BP / MBEL55E).